A 172-amino-acid chain; its full sequence is 3-hydroxydecanoyl-[acyl-carrier-protein] dehydratase (172 aa).

Histidine 71 is a catalytic residue.

Belongs to the thioester dehydratase family. FabA subfamily. As to quaternary structure, homodimer.

The protein resides in the cytoplasm. It carries out the reaction a (3R)-hydroxyacyl-[ACP] = a (2E)-enoyl-[ACP] + H2O. The catalysed reaction is (3R)-hydroxydecanoyl-[ACP] = (2E)-decenoyl-[ACP] + H2O. The enzyme catalyses (2E)-decenoyl-[ACP] = (3Z)-decenoyl-[ACP]. Its pathway is lipid metabolism; fatty acid biosynthesis. Necessary for the introduction of cis unsaturation into fatty acids. Catalyzes the dehydration of (3R)-3-hydroxydecanoyl-ACP to E-(2)-decenoyl-ACP and then its isomerization to Z-(3)-decenoyl-ACP. Can catalyze the dehydratase reaction for beta-hydroxyacyl-ACPs with saturated chain lengths up to 16:0, being most active on intermediate chain length. This is 3-hydroxydecanoyl-[acyl-carrier-protein] dehydratase from Vibrio cholerae serotype O1 (strain ATCC 39541 / Classical Ogawa 395 / O395).